Consider the following 547-residue polypeptide: Probable bifunctional tRNA threonylcarbamoyladenosine biosynthesis protein (547 aa).

The interval 1-329 (MKKTFILGIE…FRTDDVKVTW (329 aa)) is kae1. Positions 113, 117, and 134 each coordinate Fe cation. Residues 134–138 (YVSGA), aspartate 166, glycine 179, glutamate 183, and asparagine 262 each bind L-threonylcarbamoyladenylate. Aspartate 290 contacts Fe cation. Positions 340–547 (EISPETFFRM…EEIKKRARYA (208 aa)) constitute a Protein kinase domain. ATP-binding positions include 355 to 363 (LDNGAEAVV) and lysine 377. Residue aspartate 464 is the Proton acceptor; for kinase activity of the active site.

The protein in the N-terminal section; belongs to the KAE1 / TsaD family. In the C-terminal section; belongs to the protein kinase superfamily. Tyr protein kinase family. BUD32 subfamily. Component of the KEOPS complex that consists of Kae1, Bud32, Cgi121 and Pcc1; the whole complex dimerizes. The cofactor is Fe(2+).

Its subcellular location is the cytoplasm. It carries out the reaction L-seryl-[protein] + ATP = O-phospho-L-seryl-[protein] + ADP + H(+). The enzyme catalyses L-threonyl-[protein] + ATP = O-phospho-L-threonyl-[protein] + ADP + H(+). The catalysed reaction is L-threonylcarbamoyladenylate + adenosine(37) in tRNA = N(6)-L-threonylcarbamoyladenosine(37) in tRNA + AMP + H(+). Required for the formation of a threonylcarbamoyl group on adenosine at position 37 (t(6)A37) in tRNAs that read codons beginning with adenine. Is a component of the KEOPS complex that is probably involved in the transfer of the threonylcarbamoyl moiety of threonylcarbamoyl-AMP (TC-AMP) to the N6 group of A37. The Kae1 domain likely plays a direct catalytic role in this reaction. The Bud32 domain probably displays kinase activity that regulates Kae1 function. This Methanosarcina mazei (strain ATCC BAA-159 / DSM 3647 / Goe1 / Go1 / JCM 11833 / OCM 88) (Methanosarcina frisia) protein is Probable bifunctional tRNA threonylcarbamoyladenosine biosynthesis protein.